The chain runs to 421 residues: C4-dicarboxylate transport protein (421 aa).

Transmembrane regions (helical) follow at residues 9 to 29 (VQVITAVIIGVIVGLVWPDVG), 39 to 59 (FINAVKMVIAPIIFFTIVLGI), 76 to 96 (FIYFEVVTTLALIIGLFVVNI), 145 to 165 (GDILQVLFFSILFGVGLAALG), 185 to 205 (IIGYIMRAAPIGAFGAMAYTI), 219 to 239 (LMMSVYITMFLFVFVALNIIC), 316 to 336 (VFGVDLSIGQQITIILVLMLT), and 348 to 368 (FIVLASTLSALQVIPLEGLAL).

Belongs to the dicarboxylate/amino acid:cation symporter (DAACS) (TC 2.A.23) family.

The protein localises to the cell membrane. Responsible for the transport of succinate and fumarate, but not malate, across the membrane. The polypeptide is C4-dicarboxylate transport protein (dctA) (Bacillus subtilis (strain 168)).